Reading from the N-terminus, the 59-residue chain is Large ribosomal subunit protein bL32 (59 aa).

The disordered stretch occupies residues Met-1–Asp-59. 2 stretches are compositionally biased toward basic residues: residues Ser-9–His-19 and Arg-49–Asp-59.

Belongs to the bacterial ribosomal protein bL32 family.

This chain is Large ribosomal subunit protein bL32, found in Cupriavidus necator (strain ATCC 17699 / DSM 428 / KCTC 22496 / NCIMB 10442 / H16 / Stanier 337) (Ralstonia eutropha).